We begin with the raw amino-acid sequence, 170 residues long: Translationally-controlled tumor protein homolog (170 aa).

Residues 1–170 (MIIYKCIISG…FKDGLLAEKC (170 aa)) form the TCTP domain.

The protein belongs to the TCTP family.

Its subcellular location is the cytoplasm. Its function is as follows. Involved in calcium binding and microtubule stabilization. This chain is Translationally-controlled tumor protein homolog (tpt1), found in Lateolabrax japonicus (Japanese sea perch).